Here is a 251-residue protein sequence, read N- to C-terminus: MDFPSIKIKDFEGPFDLLLHLIKKNQMDIYNVEISKITNQYLKYIDDMKFMDLEITSEFIVVAATLIEIKSKHLLPKIKKDEDEDEEDQEKNLIEKLILYKKIKRVAEFFKDRYVNSGELYTKKPEIIEEINLPNNNEDIFKNLTLLELYNMYNNLLEIYNNKQNKANVIQKRIYVDKYKIEDKLEYLLGLIENNEVSKFSEIIDKCECKLECIVSFLALLEMVKLKKVRVYQSDSFDNILIERRQDEGEE.

It belongs to the ScpA family. Component of a cohesin-like complex composed of ScpA, ScpB and the Smc homodimer, in which ScpA and ScpB bind to the head domain of Smc. The presence of the three proteins is required for the association of the complex with DNA.

It localises to the cytoplasm. Functionally, participates in chromosomal partition during cell division. May act via the formation of a condensin-like complex containing Smc and ScpB that pull DNA away from mid-cell into both cell halves. The chain is Segregation and condensation protein A from Clostridium botulinum (strain Eklund 17B / Type B).